Consider the following 249-residue polypeptide: Nodulation protein H (249 aa).

Required for the formation of sulfated nod factor. Proposed to transfer activated sulfate (PAPS) to a N-acetylglucosamine of the nod factor. This is Nodulation protein H (nodH) from Rhizobium tropici.